The chain runs to 401 residues: Methionine import ATP-binding protein MetN (401 aa).

In terms of domain architecture, ABC transporter spans 6–248; it reads ITFDHVVKEF…PQQPVTKRFI (243 aa). 45 to 52 contributes to the ATP binding site; that stretch reads GYSGAGKS.

This sequence belongs to the ABC transporter superfamily. Methionine importer (TC 3.A.1.24) family. The complex is composed of two ATP-binding proteins (MetN), two transmembrane proteins (MetI) and a solute-binding protein (MetQ).

Its subcellular location is the cell membrane. The enzyme catalyses L-methionine(out) + ATP + H2O = L-methionine(in) + ADP + phosphate + H(+). The catalysed reaction is D-methionine(out) + ATP + H2O = D-methionine(in) + ADP + phosphate + H(+). Functionally, part of the ABC transporter complex MetNIQ involved in methionine import. Responsible for energy coupling to the transport system. This Bifidobacterium longum (strain NCC 2705) protein is Methionine import ATP-binding protein MetN.